The primary structure comprises 188 residues: Elongation factor P (188 aa).

K34 is modified (N6-(3,6-diaminohexanoyl)-5-hydroxylysine).

This sequence belongs to the elongation factor P family. Post-translationally, may be beta-lysylated on the epsilon-amino group of Lys-34 by the combined action of EpmA and EpmB, and then hydroxylated on the C5 position of the same residue by EpmC (if this protein is present). Lysylation is critical for the stimulatory effect of EF-P on peptide-bond formation. The lysylation moiety may extend toward the peptidyltransferase center and stabilize the terminal 3-CCA end of the tRNA. Hydroxylation of the C5 position on Lys-34 may allow additional potential stabilizing hydrogen-bond interactions with the P-tRNA.

The protein localises to the cytoplasm. Its pathway is protein biosynthesis; polypeptide chain elongation. Involved in peptide bond synthesis. Alleviates ribosome stalling that occurs when 3 or more consecutive Pro residues or the sequence PPG is present in a protein, possibly by augmenting the peptidyl transferase activity of the ribosome. Modification of Lys-34 is required for alleviation. This Yersinia pseudotuberculosis serotype O:1b (strain IP 31758) protein is Elongation factor P.